A 338-amino-acid chain; its full sequence is MLTERQLLILQTIIDDFIGSAQPVGSRTLAKKDEITFSSATIRNEMADLEELGFIEKTHSSSGRVPSEKGYRFYVDHLLAPQNLPNDEIVQIKDLFAERIFEAEKIAQQSAQILSELTNYTAIVLGPKLSTNKLKNVQIVPLDRQTAVAIIVTDTGHVQSKTITVPESVDLSDLEKMVNILNEKLSGVPMSELHNKIFKEIVTVLRGYVHNYDSAIKILDGTFQVPLSEKIYFGGKANMLSQPEFHDIQKVRSLLTMIDNEAEFYDILRHKQVGIQVKIGRENSATAMEDCSLISATYSIGEEQLGTIAILGPTRMQYSRVISLLQLFTRQITDGLKK.

This sequence belongs to the HrcA family.

Negative regulator of class I heat shock genes (grpE-dnaK-dnaJ and groELS operons). Prevents heat-shock induction of these operons. The chain is Heat-inducible transcription repressor HrcA from Bacillus cereus (strain AH187).